The sequence spans 453 residues: tRNA modification GTPase MnmE (453 aa).

3 residues coordinate (6S)-5-formyl-5,6,7,8-tetrahydrofolate: arginine 23, glutamate 80, and lysine 120. A TrmE-type G domain is found at 216 to 375; sequence GSKIVIIGKP…LIKYLKDLNC (160 aa). Asparagine 226 contributes to the K(+) binding site. Residues 226–231, 245–251, and 270–273 contribute to the GTP site; these read NSGKSS, TSIEGTT, and DTAG. Serine 230 lines the Mg(2+) pocket. The K(+) site is built by threonine 245, isoleucine 247, and threonine 250. Threonine 251 is a binding site for Mg(2+). Lysine 453 provides a ligand contact to (6S)-5-formyl-5,6,7,8-tetrahydrofolate.

Belongs to the TRAFAC class TrmE-Era-EngA-EngB-Septin-like GTPase superfamily. TrmE GTPase family. As to quaternary structure, homodimer. Heterotetramer of two MnmE and two MnmG subunits. K(+) is required as a cofactor.

It is found in the cytoplasm. Exhibits a very high intrinsic GTPase hydrolysis rate. Involved in the addition of a carboxymethylaminomethyl (cmnm) group at the wobble position (U34) of certain tRNAs, forming tRNA-cmnm(5)s(2)U34. The polypeptide is tRNA modification GTPase MnmE (Wigglesworthia glossinidia brevipalpis).